A 362-amino-acid chain; its full sequence is MNDQKMSCWRKKSKKKNSEANQRQRWFQENGKVLLEDLIELCNGKSNPIKTFSAEEILQATDNFSESNLVIRFNFMYRGILQNRPVLIKRATWNYYKSDTLEKICRDIAVSSMVSGHKNFLKLLGCCLEFEHPVLVCEYAERIPFNTPNPEMLLPWRMRIKIAKEIAIAVSYLHTALSRTMIHTDIQPFNIFVDSNGTAKLSDFCLCIAIPEGETFVKVHADRVEGTLDYLEYNYAATGLITEYTDVFSFGVLLQNFFTRTYGVVDCCCSEDESLFEEFEDKQNVMNLRISDRISKFVEEGRIFDMLDPKMLESMGDDETEEHKIRRMKAVLMLSLRCTGHRGDVPKMMEVAKELKRIERWT.

Residues 1–23 form a disordered region; that stretch reads MNDQKMSCWRKKSKKKNSEANQR. The Protein kinase domain maps to 35 to 362; that stretch reads LEDLIELCNG…KELKRIERWT (328 aa). Residues 41-49 and Lys89 each bind ATP; that span reads LCNGKSNPI. Asp185 functions as the Proton acceptor in the catalytic mechanism.

It belongs to the protein kinase superfamily. Ser/Thr protein kinase family. ZRK subfamily.

It catalyses the reaction L-seryl-[protein] + ATP = O-phospho-L-seryl-[protein] + ADP + H(+). The enzyme catalyses L-threonyl-[protein] + ATP = O-phospho-L-threonyl-[protein] + ADP + H(+). This Arabidopsis thaliana (Mouse-ear cress) protein is Serine/threonine-protein kinase ZRK4.